The chain runs to 563 residues: Eukaryotic translation initiation factor 3 subunit D-1 (563 aa).

Positions 98–167 (VQKPPHQRGR…GPPPKMRESS (70 aa)) are disordered. Residues 100–121 (KPPHQRGRFRNMRNSRSGRGRN) are compositionally biased toward basic residues. A Phosphothreonine modification is found at Thr-128. Residues 291 to 305 (EFDLLTVNETSVEPP) are RNA gate.

Belongs to the eIF-3 subunit D family. In terms of assembly, component of the eukaryotic translation initiation factor 3 (eIF-3) complex. The eIF-3 complex interacts with pix.

The protein localises to the cytoplasm. Functionally, mRNA cap-binding component of the eukaryotic translation initiation factor 3 (eIF-3) complex, which is involved in protein synthesis of a specialized repertoire of mRNAs and, together with other initiation factors, stimulates binding of mRNA and methionyl-tRNAi to the 40S ribosome. The eIF-3 complex specifically targets and initiates translation of a subset of mRNAs involved in cell proliferation. In the eIF-3 complex, eif3d specifically recognizes and binds the 7-methylguanosine cap of a subset of mRNAs. This Drosophila mojavensis (Fruit fly) protein is Eukaryotic translation initiation factor 3 subunit D-1.